The following is a 92-amino-acid chain: Large ribosomal subunit protein bL25 (92 aa).

Belongs to the bacterial ribosomal protein bL25 family. Part of the 50S ribosomal subunit; part of the 5S rRNA/L5/L18/L25 subcomplex. Contacts the 5S rRNA. Binds to the 5S rRNA independently of L5 and L18.

This is one of the proteins that binds to the 5S RNA in the ribosome where it forms part of the central protuberance. The sequence is that of Large ribosomal subunit protein bL25 from Photobacterium profundum (strain SS9).